The primary structure comprises 351 residues: Ubiquinol oxidase 4, chloroplastic/chromoplastic (351 aa).

The transit peptide at 1-56 (MAAISGISSGTLTISRPLVTLRRSRAAVSYSSSHRLLHHLPLSSRRLLLRNNHRVQ) directs the protein to the chloroplast and chromoplast. The tract at residues 71-91 (ESFKAETSTGTEPLEEPNMSS) is disordered. Residues 132 to 152 (FFVLETIARVPYFAFMSVLHM) traverse the membrane as a helical segment. Fe cation-binding residues include glutamate 136, glutamate 175, and histidine 178. A helical membrane pass occupies residues 195-215 (FLAQHIATFYYFMTVFLYILS). Fe cation-binding residues include glutamate 227, glutamate 296, and histidine 299.

This sequence belongs to the alternative oxidase family. The cofactor is Fe cation. Ubiquitous.

The protein localises to the plastid. It is found in the chloroplast thylakoid membrane. It localises to the chromoplast membrane. It catalyses the reaction 2 a ubiquinol + O2 = 2 a ubiquinone + 2 H2O. Functionally, acts early in chloroplast biogenesis as a component of a redox chain responsible for phytoene desaturation. Prevents the generation of toxic oxygen radicals and photooxidation of the nascent photosynthetic apparatus. Involved in the differentiation of multiple plastid types, including chloroplasts, amyloplasts, and etioplasts. Might participate in the chloroplast respiratory chain. This is Ubiquinol oxidase 4, chloroplastic/chromoplastic (AOX4) from Arabidopsis thaliana (Mouse-ear cress).